Reading from the N-terminus, the 536-residue chain is Multicopper oxidase CueO (536 aa).

Residues 1-28 (MLRRDFLKYSVALGVASALPLWSRAAFA) constitute a signal peptide (tat-type signal). 3 consecutive Plastocyanin-like domains span residues 53–165 (KAGQ…IEDD), 229–295 (GWLR…AFDL), and 424–536 (FHNA…GFTV). Cu cation is bound by residues H101, H103, H141, and H143. H463, H466, H468, H519, C520, H521, and H525 together coordinate Cu cation.

Belongs to the multicopper oxidase family. Monomer. It depends on Cu cation as a cofactor. Post-translationally, predicted to be exported by the Tat system. The position of the signal peptide cleavage has not been experimentally proven.

It is found in the periplasm. The enzyme catalyses 4 Cu(+) + O2 + 4 H(+) = 4 Cu(2+) + 2 H2O. In terms of biological role, multicopper oxidase involved in copper homeostasis and copper tolerance under both aerobic and anaerobic conditions. Is responsible for the oxidation of Cu(+) to the less harmful Cu(2+) in the periplasm, thereby preventing Cu(+) from entering the cytoplasm. The protein is Multicopper oxidase CueO (cueO) of Salmonella typhimurium (strain LT2 / SGSC1412 / ATCC 700720).